Reading from the N-terminus, the 354-residue chain is Homeobox-leucine zipper protein HOX27 (354 aa).

Positions 98–175 (SVAAGAPGME…DDEGASARKK (78 aa)) are disordered. A compositionally biased stretch (gly residues) spans 148–157 (QGGGGGGGGE). The segment at residues 171–230 (SARKKLRLSKEQSAFLEESFKEHSTLNPKQKVALAKQLNLRPRQVEVWFQNRRARTKLKQ) is a DNA-binding region (homeobox). The tract at residues 229–273 (KQTEVDCEYLKRCCETLTEENRRLHKELAELRALKTARPFYMHLP) is leucine-zipper. The segment at 294 to 323 (STSAPAAATSPAAAPTAAARTAVASPEPHR) is disordered.

It belongs to the HD-ZIP homeobox family. Class II subfamily. As to expression, expressed in seedlings, roots, stems, leaf sheaths and blades and panicles.

Its subcellular location is the nucleus. In terms of biological role, probable transcription factor. This is Homeobox-leucine zipper protein HOX27 (HOX27) from Oryza sativa subsp. japonica (Rice).